The primary structure comprises 526 residues: MSSIKRALISLSDKTGAVEFAQTLHKLGVEILSTGGTAKLLADAGVPVIEVADYTGFPEMLDGRVKTLHPKIHGGILGRRDLDEHVAKMEEHGIGNIDLVCVNLYLFAATIAKPNCTLEDAIENIDIGGPTMVRSAAKNWKHVAIVTDTADFPAIAAELEANNGALSDKTRFNLSRKAFSHTAQYDGMISNYLTSLSDDVLSGTPEIAGFPGRFNQSWIKVQDMRYGENPHQRAAFYRDIDPAAGSLAAYKQLQGKELSYNNIADADAAWEAVKSFDVPACVIVKHANPCGVAIASNTLDAYKLAYATDTTSAFGGIIAFNREVDGATVKQITDNQFMEVLMAPKFTAEALEIAAAKKNVRVLEVPLEAGANRFELKRVGGGLLVQTPDIHRISRADLKVVSKRQPTEQEWNDLLFVWNVAKYVKSNAIVFGKGGQTYGIGAGQMSRVDSTRIAARKAQDAGLDLNGACAASDAFFPFRDGVDVIAEQGIKAIIHPAGSMRDQEVFDAADEHGIAMVVTGIRHFRH.

Residues 1-147 (MSSIKRALIS…KNWKHVAIVT (147 aa)) enclose the MGS-like domain.

This sequence belongs to the PurH family.

It carries out the reaction (6R)-10-formyltetrahydrofolate + 5-amino-1-(5-phospho-beta-D-ribosyl)imidazole-4-carboxamide = 5-formamido-1-(5-phospho-D-ribosyl)imidazole-4-carboxamide + (6S)-5,6,7,8-tetrahydrofolate. The catalysed reaction is IMP + H2O = 5-formamido-1-(5-phospho-D-ribosyl)imidazole-4-carboxamide. The protein operates within purine metabolism; IMP biosynthesis via de novo pathway; 5-formamido-1-(5-phospho-D-ribosyl)imidazole-4-carboxamide from 5-amino-1-(5-phospho-D-ribosyl)imidazole-4-carboxamide (10-formyl THF route): step 1/1. Its pathway is purine metabolism; IMP biosynthesis via de novo pathway; IMP from 5-formamido-1-(5-phospho-D-ribosyl)imidazole-4-carboxamide: step 1/1. The polypeptide is Bifunctional purine biosynthesis protein PurH (Neisseria meningitidis serogroup B (strain ATCC BAA-335 / MC58)).